Reading from the N-terminus, the 256-residue chain is GTP cyclohydrolase FolE2 (256 aa).

Belongs to the GTP cyclohydrolase IV family.

It catalyses the reaction GTP + H2O = 7,8-dihydroneopterin 3'-triphosphate + formate + H(+). It functions in the pathway cofactor biosynthesis; 7,8-dihydroneopterin triphosphate biosynthesis; 7,8-dihydroneopterin triphosphate from GTP: step 1/1. In terms of biological role, converts GTP to 7,8-dihydroneopterin triphosphate. The polypeptide is GTP cyclohydrolase FolE2 (Caldicellulosiruptor saccharolyticus (strain ATCC 43494 / DSM 8903 / Tp8T 6331)).